Consider the following 608-residue polypeptide: Serine/arginine repetitive matrix protein 4 (608 aa).

Disordered stretches follow at residues 34 to 246 (ASIT…PLPR) and 261 to 608 (SAAD…STRR). Over residues 78 to 100 (GREKACRELDPARAHSASQDRDP) the composition is skewed to basic and acidic residues. 2 stretches are compositionally biased toward basic residues: residues 107-123 (RGKKKKKKSTRKKRRRS) and 131-187 (VKKK…HRCP). Positions 188 to 200 (SRSQSSELRSPSC) are enriched in low complexity. Basic and acidic residues predominate over residues 201–213 (ESRHRGRSPEEGR). Positions 214–228 (KSRRTHSRRCSKNHC) are enriched in basic residues. The span at 289 to 299 (TSSPPSTQTSS) shows a compositional bias: low complexity. Positions 322 to 339 (CGNTSDSGNSFTTSSPQN) are enriched in polar residues. 2 stretches are compositionally biased toward low complexity: residues 389–420 (RSSSYTSTRSSSPSSRSPNPRASPRYTRSRST) and 428–459 (SRSPSYSSKSGKRSPPSRSSRSRRSPSYSRYS). Basic and acidic residues predominate over residues 460-477 (PSRERDLKYGEKEPQPRE). Basic residues predominate over residues 478-494 (RARRRRRSYSPMRKRRR). The segment covering 495-504 (DSPSHLEARR) has biased composition (basic and acidic residues). The segment covering 518-555 (PSPSSSSSLSSASSWYSSSSSSSSSSSRSPSRSYSRSR) has biased composition (low complexity). The segment covering 556 to 573 (SPSRSHSSRSQTRSRTRT) has biased composition (basic residues). The span at 574-608 (SRSSSSRSLSLGSRSRSRNRSLSYSSAESYASTRR) shows a compositional bias: low complexity.

It belongs to the nSR100 family. Post-translationally, phosphorylated. Specifically expressed in neuronal cells (at protein level). Expressed in adult nervous system and sensory organ tissues.

It is found in the nucleus. Functionally, splicing factor specifically required for neural cell differentiation. Acts in conjunction with nPTB/PTBP2 by binding directly to its regulated target transcripts and promotes neural-specific exon inclusion in many genes that function in neural cell differentiation. Required to promote the inclusion of neural-specific exon 10 in nPTB/PTBP2, leading to increased expression of neural-specific nPTB/PTBP2. Also promotes the inclusion of exon 16 in DAAM1 in neuron extracts. Promotes alternative splicing of REST transcripts to produce REST isoform 2 (REST4) with greatly reduced repressive activity, thereby activating expression of REST targets in neural cells. Plays an important role during embryonic development as well as in the proper functioning of the adult nervous system. Regulates alternative splicing events in genes with important neuronal functions. This chain is Serine/arginine repetitive matrix protein 4 (Srrm4), found in Mus musculus (Mouse).